Reading from the N-terminus, the 30-residue chain is TMCYSHTTTSRAILTNCGENSCYRKSRVHP.

Cys-3 and Cys-22 form a disulfide bridge.

The protein belongs to the three-finger toxin family. Short-chain subfamily. Acn-esterase inhibitor sub-subfamily. In terms of processing, contains 4 disulfide bonds. In terms of tissue distribution, expressed by the venom gland.

It is found in the secreted. Functionally, inhibits acetylcholinesterase. Has been described to inhibit both the slowly and the rapidly inactivating phases of potassium efflux. The polypeptide is Dendrotoxin A (Dendroaspis angusticeps (Eastern green mamba)).